The sequence spans 541 residues: Transcription termination factor MTERF4, chloroplastic (541 aa).

The N-terminal 45 residues, 1 to 45 (MKIRFCNGFTKPGFLLVHFEPPSFFAVRSRSLSDSTYGNLCNHKK), are a transit peptide targeting the chloroplast. Disordered regions lie at residues 66–103 (SRSL…SLYS) and 503–541 (EVET…EEFA). A compositionally biased stretch (basic and acidic residues) spans 85–99 (GRDRDRDKDKGRDSK). Residues 507-517 (DPSSFDMNTLM) are compositionally biased toward polar residues. The segment covering 521–541 (REEESDSEYEEEEDDDDEEFA) has biased composition (acidic residues).

The protein belongs to the mTERF family.

Its subcellular location is the plastid. The protein localises to the chloroplast. It is found in the mitochondrion. In terms of biological role, transcription termination factor required for processing and steady-state levels of plastid transcripts. Required for splicing of the chloroplastic Clp protease (ClpP) group IIa intron. Required for maturation of 16S rRNA and 23S rRNA in the chloroplast. Essential for embryogenesis. Required for the maintenance of the correct levels of transcripts in the mitochondria and chloroplasts. The protein is Transcription termination factor MTERF4, chloroplastic of Arabidopsis thaliana (Mouse-ear cress).